Here is a 105-residue protein sequence, read N- to C-terminus: MERIQIISNHILPIVQHNNNNKQYYEQQYLLLANNTTDAIMELSEEHEKEESLRKIQCENNGIEYVYKPLFIDFGVHMNNNNNNKTITVDNNNNNNNNNNNNNNK.

The tract at residues 81–105 is disordered; it reads NNNNKTITVDNNNNNNNNNNNNNNK.

This is an uncharacterized protein from Dictyostelium discoideum (Social amoeba).